We begin with the raw amino-acid sequence, 306 residues long: D-alanine--D-alanine ligase (306 aa).

In terms of domain architecture, ATP-grasp spans 101–303 (KQVWQAVGLP…FSQLVVKILE (203 aa)). Position 134-189 (134-189 (FTHLGLPLIVKPSREGSSVGMSKVNTLSELPAALEEAFRHDDDILVEKWLSGPEYT)) interacts with ATP. Positions 257, 270, and 272 each coordinate Mg(2+).

This sequence belongs to the D-alanine--D-alanine ligase family. Mg(2+) is required as a cofactor. Mn(2+) serves as cofactor.

The protein localises to the cytoplasm. The catalysed reaction is 2 D-alanine + ATP = D-alanyl-D-alanine + ADP + phosphate + H(+). Its pathway is cell wall biogenesis; peptidoglycan biosynthesis. In terms of biological role, cell wall formation. This is D-alanine--D-alanine ligase from Pectobacterium carotovorum subsp. carotovorum (strain PC1).